Consider the following 603-residue polypeptide: NADH-quinone oxidoreductase subunit C/D (603 aa).

An NADH dehydrogenase I subunit C region spans residues 1 to 193; the sequence is MVNNMTDLTA…DPFTLTKQKE (193 aa). The NADH dehydrogenase I subunit D stretch occupies residues 217–603; it reads DFMFLNLGPN…IDFVMSDVDR (387 aa).

In the N-terminal section; belongs to the complex I 30 kDa subunit family. This sequence in the C-terminal section; belongs to the complex I 49 kDa subunit family. In terms of assembly, NDH-1 is composed of 13 different subunits. Subunits NuoB, CD, E, F, and G constitute the peripheral sector of the complex.

Its subcellular location is the cell inner membrane. The enzyme catalyses a quinone + NADH + 5 H(+)(in) = a quinol + NAD(+) + 4 H(+)(out). Functionally, NDH-1 shuttles electrons from NADH, via FMN and iron-sulfur (Fe-S) centers, to quinones in the respiratory chain. The immediate electron acceptor for the enzyme in this species is believed to be ubiquinone. Couples the redox reaction to proton translocation (for every two electrons transferred, four hydrogen ions are translocated across the cytoplasmic membrane), and thus conserves the redox energy in a proton gradient. The sequence is that of NADH-quinone oxidoreductase subunit C/D from Cronobacter sakazakii (strain ATCC BAA-894) (Enterobacter sakazakii).